The chain runs to 414 residues: MDNRTARFLKTRFQKYYKNAEIGLPDHLPNREWAFIFFDSMPDKMMHRHKAFGSPGEALDYLYGMAPAHVYNSTAYYEYPDARKMNEKNWLGAELIFDLDADHLPDAPKNYADMLELVKKETFKLMDFLLEDFGFSEQEIELVFSGGRGYHFHVRSPKVLKLGSAERREIVNYLSGRDLDFKYFFREVAMDGEFGTGSKTFKGMKNVPFKCTLVGYDSGWGRRIALYLTDYMKAECGKRYKKDMFPELRRYEKVGDTTIKKLISLTNSENGLKDILEKGRLDFDVRNFKDIAAYFMRESVEDFLHRFGTSVDEPVTADIKRLIRVPGSLHGGSGMLVKKLALSELEKFDPLTDAVVFGERPVKVTVLKPFSVQLKGKDLRVEEGIQEVPEYAAVYLICRGVAEYGHRRNQPGPV.

Active-site residues include aspartate 98, aspartate 100, and aspartate 312.

It belongs to the eukaryotic-type primase small subunit family. Heterodimer of a small subunit (PriS) and a large subunit (PriL). Requires Mg(2+) as cofactor. It depends on Mn(2+) as a cofactor.

Its function is as follows. Catalytic subunit of DNA primase, an RNA polymerase that catalyzes the synthesis of short RNA molecules used as primers for DNA polymerase during DNA replication. The small subunit contains the primase catalytic core and has DNA synthesis activity on its own. Binding to the large subunit stabilizes and modulates the activity, increasing the rate of DNA synthesis while decreasing the length of the DNA fragments, and conferring RNA synthesis capability. The DNA polymerase activity may enable DNA primase to also catalyze primer extension after primer synthesis. May also play a role in DNA repair. This chain is DNA primase small subunit PriS, found in Methanosarcina barkeri (strain Fusaro / DSM 804).